The sequence spans 206 residues: Dephospho-CoA kinase (206 aa).

One can recognise a DPCK domain in the interval 4 to 200 (IVALTGGIGS…AYYLQLASQF (197 aa)). 12–17 (GSGKST) contacts ATP.

The protein belongs to the CoaE family.

Its subcellular location is the cytoplasm. It catalyses the reaction 3'-dephospho-CoA + ATP = ADP + CoA + H(+). Its pathway is cofactor biosynthesis; coenzyme A biosynthesis; CoA from (R)-pantothenate: step 5/5. Catalyzes the phosphorylation of the 3'-hydroxyl group of dephosphocoenzyme A to form coenzyme A. The sequence is that of Dephospho-CoA kinase from Escherichia coli O6:H1 (strain CFT073 / ATCC 700928 / UPEC).